The following is a 124-amino-acid chain: Succinate dehydrogenase cytochrome b556 subunit (124 aa).

Over 1–29 the chain is Cytoplasmic; it reads MTKTKQEIYNKRPTSPHLSIYKLQISSTL. A helical membrane pass occupies residues 30 to 55; the sequence is SILHRMTGVALFFAVSILAWWLILSK. Residues 56–67 lie on the Periplasmic side of the membrane; sequence YDNNYLQFANCC. A helical membrane pass occupies residues 68–88; sequence IIKICLVAVSYAWFYHLCNGI. H83 contacts heme. The Cytoplasmic portion of the chain corresponds to 89–103; sequence RHLFWDIGYGFSIKA. Residues 104 to 124 traverse the membrane as a helical segment; that stretch reads VNITGWCVVVCSILLTMLLWV.

This sequence belongs to the cytochrome b560 family. In terms of assembly, part of an enzyme complex containing four subunits: a flavoprotein, an iron-sulfur protein, plus two membrane-anchoring proteins, SdhC and SdhD. The complex can form homotrimers. Heme serves as cofactor.

The protein resides in the cell inner membrane. The protein operates within carbohydrate metabolism; tricarboxylic acid cycle. Membrane-anchoring subunit of succinate dehydrogenase (SDH). The polypeptide is Succinate dehydrogenase cytochrome b556 subunit (sdhC) (Rickettsia felis (strain ATCC VR-1525 / URRWXCal2) (Rickettsia azadi)).